The chain runs to 202 residues: LexA repressor (202 aa).

Positions 28 to 48 form a DNA-binding region, H-T-H motif; it reads RAEIAQQLGFRSPNAAEEHLK. Residues S119 and K156 each act as for autocatalytic cleavage activity in the active site.

This sequence belongs to the peptidase S24 family. In terms of assembly, homodimer.

It carries out the reaction Hydrolysis of Ala-|-Gly bond in repressor LexA.. In terms of biological role, represses a number of genes involved in the response to DNA damage (SOS response), including recA and lexA. Binds to the 16 bp palindromic sequence 5'-CTGTATATATATACAG-3'. In the presence of single-stranded DNA, RecA interacts with LexA causing an autocatalytic cleavage which disrupts the DNA-binding part of LexA, leading to derepression of the SOS regulon and eventually DNA repair. This chain is LexA repressor, found in Pectobacterium carotovorum subsp. carotovorum (strain PC1).